The primary structure comprises 233 residues: NAD-dependent protein deacylase (233 aa).

Positions 1–230 (MKNIMILSGA…ALDIENFMKD (230 aa)) constitute a Deacetylase sirtuin-type domain. An NAD(+)-binding site is contributed by 9–28 (GAGLSAPSGLKTFRDNDGLW). Substrate contacts are provided by tyrosine 53 and arginine 56. 88-91 (QNVD) is a binding site for NAD(+). Histidine 106 serves as the catalytic Proton acceptor. Residues cysteine 114, cysteine 117, cysteine 133, and cysteine 136 each contribute to the Zn(2+) site. NAD(+) contacts are provided by residues 172-174 (GTS) and isoleucine 213.

Belongs to the sirtuin family. Class III subfamily. Zn(2+) serves as cofactor.

Its subcellular location is the cytoplasm. The enzyme catalyses N(6)-acetyl-L-lysyl-[protein] + NAD(+) + H2O = 2''-O-acetyl-ADP-D-ribose + nicotinamide + L-lysyl-[protein]. The catalysed reaction is N(6)-succinyl-L-lysyl-[protein] + NAD(+) + H2O = 2''-O-succinyl-ADP-D-ribose + nicotinamide + L-lysyl-[protein]. In terms of biological role, NAD-dependent lysine deacetylase and desuccinylase that specifically removes acetyl and succinyl groups on target proteins. Modulates the activities of several proteins which are inactive in their acylated form. The protein is NAD-dependent protein deacylase of Campylobacter jejuni (strain RM1221).